The chain runs to 91 residues: Small ribosomal subunit protein uS17 (91 aa).

The protein belongs to the universal ribosomal protein uS17 family. As to quaternary structure, part of the 30S ribosomal subunit.

One of the primary rRNA binding proteins, it binds specifically to the 5'-end of 16S ribosomal RNA. The polypeptide is Small ribosomal subunit protein uS17 (Acidithiobacillus ferrooxidans (strain ATCC 23270 / DSM 14882 / CIP 104768 / NCIMB 8455) (Ferrobacillus ferrooxidans (strain ATCC 23270))).